A 553-amino-acid polypeptide reads, in one-letter code: Muellerian-inhibiting factor (553 aa).

Residues 1-22 (MQGPHLSLLLLLLATMGAVLQA) form the signal peptide. The propeptide occupies 23–445 (DTVEELTNTR…GREGRGRAGR (423 aa)). N-linked (GlcNAc...) asparagine glycans are attached at residues asparagine 325 and asparagine 409. Cystine bridges form between cysteine 455–cysteine 519, cysteine 481–cysteine 550, and cysteine 485–cysteine 552.

This sequence belongs to the TGF-beta family. In terms of assembly, homodimer; disulfide-linked. In terms of processing, preproprotein is proteolytically processed to generate N- and C-terminal cleavage products that homodimerize and associate to form a biologically active non-covalent complex. Binding of the non-covalent complex to AMHR2 induces dissociation of the pro-region from the mature C-terminal dimer. The N-terminal portion of the protein, despite having no intrinsic activity, has the role of amplifying the activity of the C-terminus. As to expression, mainly expressed in granulosa cells from preantral and small antral follicles.

Its subcellular location is the secreted. In terms of biological role, plays an important role in several reproductive functions. Induces Muellerian duct regression during male fetal sexual differentiation and plays a role in Leydig cell differentiation and function. In female acts as a negative regulator of the primordial to primary follicle transition and decreases FSH sensitivity of growing follicles. AMH signals by binding to a specific type-II receptor, AMHR2, that heterodimerizes with type-I receptors (ACVR1 and BMPR1A), and recruiting SMAD proteins that are translocated to the nucleus to regulate target gene expression. This Rattus norvegicus (Rat) protein is Muellerian-inhibiting factor (Amh).